The following is a 314-amino-acid chain: Peroxidase 2 (314 aa).

Positions 1-23 (MASASSVSLMLLVAAAMASAASA) are cleaved as a signal peptide. Q24 carries the pyrrolidone carboxylic acid modification. 4 disulfides stabilise this stretch: C34-C109, C67-C72, C115-C310, and C194-C219. H65 functions as the Proton acceptor in the catalytic mechanism. Ca(2+) is bound by residues D66, V69, G71, D73, and S75. N148 carries an N-linked (GlcNAc...) asparagine glycan. A substrate-binding site is contributed by P157. N169 is a glycosylation site (N-linked (GlcNAc...) asparagine). Heme b is bound at residue H187. Residue T188 coordinates Ca(2+). The N-linked (GlcNAc...) asparagine glycan is linked to N203. Residues D234, T237, and D242 each coordinate Ca(2+). 2 N-linked (GlcNAc...) asparagine glycosylation sites follow: N274 and N309.

Belongs to the peroxidase family. Classical plant (class III) peroxidase subfamily. Ca(2+) is required as a cofactor. It depends on heme b as a cofactor.

The protein localises to the secreted. The enzyme catalyses 2 a phenolic donor + H2O2 = 2 a phenolic radical donor + 2 H2O. Functionally, removal of H(2)O(2), oxidation of toxic reductants, biosynthesis and degradation of lignin, suberization, auxin catabolism, response to environmental stresses such as wounding, pathogen attack and oxidative stress. These functions might be dependent on each isozyme/isoform in each plant tissue. In Oryza sativa subsp. indica (Rice), this protein is Peroxidase 2 (PRX112).